Consider the following 215-residue polypeptide: Cytochrome b6 (215 aa).

The chain crosses the membrane as a helical span at residues 32-52 (IFYCLGGITLTCFLIQFATGF). A heme c-binding site is contributed by cysteine 35. Heme b contacts are provided by histidine 86 and histidine 100. 3 helical membrane-spanning segments follow: residues 90–110 (ASMM…TGGF), 116–136 (LTWV…VTGY), and 186–206 (LHTF…FLMI). The heme b site is built by histidine 187 and histidine 202.

This sequence belongs to the cytochrome b family. PetB subfamily. In terms of assembly, the 4 large subunits of the cytochrome b6-f complex are cytochrome b6, subunit IV (17 kDa polypeptide, PetD), cytochrome f and the Rieske protein, while the 4 small subunits are PetG, PetL, PetM and PetN. The complex functions as a dimer. It depends on heme b as a cofactor. Requires heme c as cofactor.

The protein resides in the cellular thylakoid membrane. Component of the cytochrome b6-f complex, which mediates electron transfer between photosystem II (PSII) and photosystem I (PSI), cyclic electron flow around PSI, and state transitions. This chain is Cytochrome b6, found in Synechococcus elongatus (strain ATCC 33912 / PCC 7942 / FACHB-805) (Anacystis nidulans R2).